A 115-amino-acid polypeptide reads, in one-letter code: uncharacterized protein (115 aa).

Residues 1–74 are disordered; it reads MGTGLRSQSL…VPGSLGDTEQ (74 aa).

This is an uncharacterized protein from Homo sapiens (Human).